A 1025-amino-acid polypeptide reads, in one-letter code: AP-2 complex subunit alpha (1025 aa).

The interval 713–737 is disordered; it reads RSIMVPMPPPSRRNTIDDVNSKISS. At Thr727 the chain carries Phosphothreonine. At Ser733 the chain carries Phosphoserine.

It belongs to the adaptor complexes large subunit family. As to quaternary structure, adaptor protein complex 2 (AP-2) is a heterotetramer composed of two large adaptins (alpha-type subunit APL3 and beta-type subunit APL1), a medium chain (mu-type subunit APM4) and a small adaptin (sigma-type subunit APS2).

The protein resides in the cell membrane. It localises to the membrane. The protein localises to the coated pit. Its function is as follows. Adaptins are components of the adaptor complexes which link clathrin to receptors in coated vesicles. Clathrin-associated protein complexes are believed to interact with the cytoplasmic tails of membrane proteins, leading to their selection and concentration. Alpha adaptin is a subunit of the plasma membrane adaptor. Facilitates interaction between APL1 and APS2. This is AP-2 complex subunit alpha (APL3) from Saccharomyces cerevisiae (strain ATCC 204508 / S288c) (Baker's yeast).